Consider the following 154-residue polypeptide: 3-hydroxyacyl-[acyl-carrier-protein] dehydratase FabZ (154 aa).

His57 is a catalytic residue.

The protein belongs to the thioester dehydratase family. FabZ subfamily.

It is found in the cytoplasm. The catalysed reaction is a (3R)-hydroxyacyl-[ACP] = a (2E)-enoyl-[ACP] + H2O. Functionally, involved in unsaturated fatty acids biosynthesis. Catalyzes the dehydration of short chain beta-hydroxyacyl-ACPs and long chain saturated and unsaturated beta-hydroxyacyl-ACPs. This is 3-hydroxyacyl-[acyl-carrier-protein] dehydratase FabZ from Sinorhizobium fredii (strain NBRC 101917 / NGR234).